Consider the following 693-residue polypeptide: MESSVATHWLSAFVILCSFITTQSLNNKIHEHMTIDELRNVFHVEHHSRVPEYHLVQLTHHLARRNIPTSHPANSNSADSGKTPHLKTEKVTKGGYKAPSLLNDEMFVEAKKRIEDVDIMGDPNSTVSVDFKVQSSEFGDSESLSDKEHSAESQEDGVHKIDLEAFGRQLKLVLKKQEGLIKKDGLKVWKALKNETQPHGVDYEEMITEDDEEFGDLYQDEENGAALLIRRHPKHGKLVVEGSIGHDLVIRPIPDTMTSPAQDDEMFMDPSSMADMVSIDTGLPIMKRKKEEQDRLQEALNGAQHVIIKRDPAEVDHMSDYAFMEPDHIGKRYRRKRSAEAHNRQKREAPYVIYPEILVIVDYDGYRLHGGDNVQIKRYFVSFWNGVDLRYKLLKGPRIRISIAGIIISRGRDATPYLERNRVGRDAIDSAAALTDMGKYLFRERRLPVYDIAVAITKLDMCRRQYANDACNRGTAGFAYVGGACVVNKRLEKVNSVAIIEDTGGFSGIIVAAHEVGHLLGAVHDGSPPPSYLGGPGAEKCRWEDGFIMSDLRHTEKGFRWSPCSVQSFHHFLNGDTATCLYNSPHEDDSLPRVLPGRLLTLDAQCRKDRGTSACFKDERVCAQLFCFDAGSGYCVAYRPAAEGSPCGDGQYCINGQCITEHENIIPDYSQHTPSYVRPETSPFYANITSSRH.

The first 24 residues, Met-1–Ser-24, serve as a signal peptide directing secretion. A compositionally biased stretch (polar residues) spans Ile-67–Ser-80. Residues Ile-67–Val-91 are disordered. Residues Asn-124 and Asn-194 are each glycosylated (N-linked (GlcNAc...) asparagine). Residues Ile-353–Pro-585 form the Peptidase M12B domain. Cystine bridges form between Cys-485/Cys-580 and Cys-541/Cys-564. His-514 contributes to the Zn(2+) binding site. Positions His-514–Asp-525 match the Metal-binding motif. The active site involves Glu-515. Zn(2+) contacts are provided by His-518 and His-524. N-linked (GlcNAc...) asparagine glycosylation is present at Asn-687.

The cofactor is Zn(2+).

It localises to the secreted. The protein localises to the extracellular space. It is found in the extracellular matrix. In terms of biological role, involved in larval molting and metamorphosis. May degrade extracellular matrix (ECM) and basement membrane (BM) during the development of organs to allow degeneration and remodeling of tissues. This chain is A disintegrin and metalloproteinase with thrombospondin motifs like, found in Bombyx mori (Silk moth).